We begin with the raw amino-acid sequence, 240 residues long: uncharacterized protein (240 aa).

The segment at 3-27 adopts a C2H2-type zinc-finger fold; sequence LKCLECDKLLSSIEMAEFHSTKTSH. Disordered regions lie at residues 21 to 43 and 120 to 171; these read HSTK…RSPE and AEIE…RFSI. The segment covering 120-136 has biased composition (basic and acidic residues); that stretch reads AEIERDKKRRAAERENK. The segment covering 155–166 has biased composition (low complexity); that stretch reads SSSTCTRTPPTS.

This is an uncharacterized protein from Schizosaccharomyces pombe (strain 972 / ATCC 24843) (Fission yeast).